Consider the following 165-residue polypeptide: Ribosome maturation factor RimM (165 aa).

Residues 89–161 (EADTHYIVDL…KIVVKPVRQW (73 aa)) form the PRC barrel domain.

The protein belongs to the RimM family. As to quaternary structure, binds ribosomal protein uS19.

It is found in the cytoplasm. Functionally, an accessory protein needed during the final step in the assembly of 30S ribosomal subunit, possibly for assembly of the head region. Essential for efficient processing of 16S rRNA. May be needed both before and after RbfA during the maturation of 16S rRNA. It has affinity for free ribosomal 30S subunits but not for 70S ribosomes. This chain is Ribosome maturation factor RimM, found in Clostridium botulinum (strain Alaska E43 / Type E3).